A 173-amino-acid polypeptide reads, in one-letter code: dCTP deaminase, dUMP-forming (173 aa).

Residues 93 to 98, aspartate 111, 119 to 121, glutamine 138, and tyrosine 151 contribute to the dCTP site; these read RSSIGR and TLE. Residue glutamate 121 is the Proton donor/acceptor of the active site.

Belongs to the dCTP deaminase family. As to quaternary structure, homotrimer.

The catalysed reaction is dCTP + 2 H2O = dUMP + NH4(+) + diphosphate. It functions in the pathway pyrimidine metabolism; dUMP biosynthesis; dUMP from dCTP: step 1/1. Functionally, bifunctional enzyme that catalyzes both the deamination of dCTP to dUTP and the hydrolysis of dUTP to dUMP without releasing the toxic dUTP intermediate. This Cytophaga hutchinsonii (strain ATCC 33406 / DSM 1761 / CIP 103989 / NBRC 15051 / NCIMB 9469 / D465) protein is dCTP deaminase, dUMP-forming.